Consider the following 383-residue polypeptide: UDP-N-acetylglucosamine--N-acetylmuramyl-(pentapeptide) pyrophosphoryl-undecaprenol N-acetylglucosamine transferase (383 aa).

Residues 10–12 (TGG), Asn124, Arg165, Ser190, Ile245, and Gln290 each bind UDP-N-acetyl-alpha-D-glucosamine. The disordered stretch occupies residues 364-383 (PFGQAREPGQKPARPPDLAS).

This sequence belongs to the glycosyltransferase 28 family. MurG subfamily.

Its subcellular location is the cell inner membrane. The enzyme catalyses di-trans,octa-cis-undecaprenyl diphospho-N-acetyl-alpha-D-muramoyl-L-alanyl-D-glutamyl-meso-2,6-diaminopimeloyl-D-alanyl-D-alanine + UDP-N-acetyl-alpha-D-glucosamine = di-trans,octa-cis-undecaprenyl diphospho-[N-acetyl-alpha-D-glucosaminyl-(1-&gt;4)]-N-acetyl-alpha-D-muramoyl-L-alanyl-D-glutamyl-meso-2,6-diaminopimeloyl-D-alanyl-D-alanine + UDP + H(+). Its pathway is cell wall biogenesis; peptidoglycan biosynthesis. Functionally, cell wall formation. Catalyzes the transfer of a GlcNAc subunit on undecaprenyl-pyrophosphoryl-MurNAc-pentapeptide (lipid intermediate I) to form undecaprenyl-pyrophosphoryl-MurNAc-(pentapeptide)GlcNAc (lipid intermediate II). The polypeptide is UDP-N-acetylglucosamine--N-acetylmuramyl-(pentapeptide) pyrophosphoryl-undecaprenol N-acetylglucosamine transferase (Anaeromyxobacter sp. (strain K)).